Here is a 121-residue protein sequence, read N- to C-terminus: Large ribosomal subunit protein eL8 (121 aa).

It belongs to the eukaryotic ribosomal protein eL8 family. In terms of assembly, part of the 50S ribosomal subunit. Probably part of the RNase P complex.

It localises to the cytoplasm. Multifunctional RNA-binding protein that recognizes the K-turn motif in ribosomal RNA, the RNA component of RNase P, box H/ACA, box C/D and box C'/D' sRNAs. This is Large ribosomal subunit protein eL8 from Thermoplasma acidophilum (strain ATCC 25905 / DSM 1728 / JCM 9062 / NBRC 15155 / AMRC-C165).